A 363-amino-acid polypeptide reads, in one-letter code: Cytochrome b (363 aa).

Helical transmembrane passes span valine 24 to tryptophan 44, phenylalanine 68 to phenylalanine 90, valine 105 to valine 125, and leucine 171 to phenylalanine 191. Histidine 74 and histidine 88 together coordinate heme b. Heme b is bound by residues histidine 175 and histidine 189. Histidine 194 is a binding site for a ubiquinone. The next 4 membrane-spanning stretches (helical) occupy residues phenylalanine 219–phenylalanine 239, phenylalanine 287–phenylalanine 307, leucine 321–tyrosine 341, and proline 342–leucine 362.

This sequence belongs to the cytochrome b family. As to quaternary structure, the main subunits of complex b-c1 are: cytochrome b, cytochrome c1 and the Rieske protein. Heme b serves as cofactor.

It is found in the mitochondrion inner membrane. Component of the ubiquinol-cytochrome c reductase complex (complex III or cytochrome b-c1 complex) that is part of the mitochondrial respiratory chain. The b-c1 complex mediates electron transfer from ubiquinol to cytochrome c. Contributes to the generation of a proton gradient across the mitochondrial membrane that is then used for ATP synthesis. In Trypanosoma brucei brucei, this protein is Cytochrome b (MT-CYB).